The sequence spans 237 residues: NAD-dependent protein deacetylase (237 aa).

One can recognise a Deacetylase sirtuin-type domain in the interval 1-237 (MLTTWLTEAK…LEETNRALQA (237 aa)). Ala-18, Thr-22, Phe-29, Arg-30, Gln-95, Asp-98, and His-113 together coordinate NAD(+). Residue Phe-29 participates in nicotinamide binding. Asp-98 provides a ligand contact to nicotinamide. His-113 (proton acceptor) is an active-site residue. Zn(2+) is bound by residues Cys-121, Cys-124, Cys-140, and Cys-142. Ser-180, Ser-181, Asn-205, and Ile-224 together coordinate NAD(+).

Belongs to the sirtuin family. Class U subfamily. The cofactor is Zn(2+).

It is found in the cytoplasm. It catalyses the reaction N(6)-acetyl-L-lysyl-[protein] + NAD(+) + H2O = 2''-O-acetyl-ADP-D-ribose + nicotinamide + L-lysyl-[protein]. In terms of biological role, NAD-dependent protein deacetylase which modulates the activities of several enzymes which are inactive in their acetylated form. The polypeptide is NAD-dependent protein deacetylase (Halalkalibacterium halodurans (strain ATCC BAA-125 / DSM 18197 / FERM 7344 / JCM 9153 / C-125) (Bacillus halodurans)).